Reading from the N-terminus, the 1585-residue chain is Maestro heat-like repeat-containing protein family member 2B (1585 aa).

15 HEAT repeats span residues 28–65, 228–263, 272–309, 310–346, 405–445, 531–569, 572–611, 662–699, 777–819, 964–1001, 1021–1059, 1112–1151, 1157–1195, 1258–1295, and 1363–1402; these read VNKE…DMRD, GYAL…AAVL, LRRS…LAHS, NPGE…ADEP, TLNR…LVIG, IGLL…STVL, TMLL…NSTE, ENHL…LTKT, SYKE…LKPQ, HLEV…KFIP, PTCT…HMPV, ASSG…VISM, GLYP…QGEQ, GVIL…EPIL, and CESL…EQDD.

Found in a complex at least composed of MROH2B, PRKACA isoform 2 and TCP11. Interacts with PRKACA. Interacts with TCP11. In terms of processing, constitutively phosphorylated on serine and threonine residues in acrosomal region of the sperm head, midpiece and flagellar regions of noncapacitated spermatozoa. Phosphorylation on tyrosine residues increases upon sperm capacitation within the acrosomal and tail regions in a protein kinase A (PKA)-dependent signaling pathway.

Its subcellular location is the cytoplasm. The protein resides in the cytoplasmic vesicle. The protein localises to the secretory vesicle. It is found in the acrosome. It localises to the cell projection. Its subcellular location is the cilium. The protein resides in the flagellum. Its function is as follows. May play a role in the process of sperm capacitation. In Homo sapiens (Human), this protein is Maestro heat-like repeat-containing protein family member 2B.